Here is a 254-residue protein sequence, read N- to C-terminus: Hydrolase tropI (254 aa).

Active-site residues include C141, D187, and H219.

Belongs to the dienelactone hydrolase family.

Its pathway is secondary metabolite biosynthesis. Hydrolase; part of the gene cluster that mediates the biosynthesis of the tropolone class of fungal maleic anhydrides. The pathway begins with the synthesis of 3-methylorcinaldehyde by the non-reducing polyketide synthase (PKS) tropA. 3-methylorcinaldehyde is the substrate for the FAD-dependent monooxygenase tropB to yield a dearomatized hydroxycyclohexadione. The 2-oxoglutarate-dependent dioxygenase tropC then performs the oxidative ring expansion to provide the first tropolone metabolite stipitaldehyde. Trop D converts stipitaldehyde into stipitacetal which is in turn converted to stipitalide by the short-chain dehydrogenase/reductase tropE. The next steps involve tropF, tropG, tropH, tropI and tropJ to form successive tropolone maleic anhydrides including stipitaldehydic, stipitatonic and stipitatic acids. The polypeptide is Hydrolase tropI (Talaromyces stipitatus (strain ATCC 10500 / CBS 375.48 / QM 6759 / NRRL 1006) (Penicillium stipitatum)).